Here is a 107-residue protein sequence, read N- to C-terminus: Small ribosomal subunit protein bS18 (107 aa).

The protein belongs to the bacterial ribosomal protein bS18 family. In terms of assembly, part of the 30S ribosomal subunit. Forms a tight heterodimer with protein bS6.

Its function is as follows. Binds as a heterodimer with protein bS6 to the central domain of the 16S rRNA, where it helps stabilize the platform of the 30S subunit. This is Small ribosomal subunit protein bS18 from Mycoplasmopsis agalactiae (strain NCTC 10123 / CIP 59.7 / PG2) (Mycoplasma agalactiae).